Consider the following 331-residue polypeptide: Pseudouridylate synthase TRUB2, mitochondrial (331 aa).

The transit peptide at 1 to 10 (MGSAGLSRLH) directs the protein to the mitochondrion. Residue aspartate 98 is the Nucleophile of the active site. A disordered region spans residues 296–331 (KSLSPGLDTKQLPSPGWSWDSQGPSSTLGLERGAGQ). Polar residues predominate over residues 314 to 323 (WDSQGPSSTL).

This sequence belongs to the pseudouridine synthase TruB family. As to quaternary structure, forms a regulatory protein-RNA complex, consisting of RCC1L, NGRN, RPUSD3, RPUSD4, TRUB2, FASTKD2 and 16S mt-rRNA.

It localises to the mitochondrion matrix. It catalyses the reaction a uridine in mRNA = a pseudouridine in mRNA. It carries out the reaction uridine(55) in tRNA = pseudouridine(55) in tRNA. In terms of biological role, minor enzyme contributing to the isomerization of uridine to pseudouridine (pseudouridylation) of specific mitochondrial mRNAs (mt-mRNAs) such as COXI and COXIII mt-mRNAs. As a component of a functional protein-RNA module, consisting of RCC1L, NGRN, RPUSD3, RPUSD4, TRUB2, FASTKD2 and 16S mitochondrial ribosomal RNA (16S mt-rRNA), controls 16S mt-rRNA abundance and is required for intra-mitochondrial translation. Also catalyzes pseudouridylation of some tRNAs, including synthesis of pseudouridine(55) from uracil-55, in the psi GC loop of a subset of tRNAs. The polypeptide is Pseudouridylate synthase TRUB2, mitochondrial (Homo sapiens (Human)).